The primary structure comprises 257 residues: UPF0246 protein Shewmr4_2963 (257 aa).

It belongs to the UPF0246 family.

This Shewanella sp. (strain MR-4) protein is UPF0246 protein Shewmr4_2963.